Consider the following 287-residue polypeptide: ATP synthase gamma chain (287 aa).

The protein belongs to the ATPase gamma chain family. F-type ATPases have 2 components, CF(1) - the catalytic core - and CF(0) - the membrane proton channel. CF(1) has five subunits: alpha(3), beta(3), gamma(1), delta(1), epsilon(1). CF(0) has three main subunits: a, b and c.

The protein localises to the cell inner membrane. In terms of biological role, produces ATP from ADP in the presence of a proton gradient across the membrane. The gamma chain is believed to be important in regulating ATPase activity and the flow of protons through the CF(0) complex. The protein is ATP synthase gamma chain of Xylella fastidiosa (strain M12).